Here is a 198-residue protein sequence, read N- to C-terminus: Holliday junction branch migration complex subunit RuvA (198 aa).

The segment at 1 to 64 (MYEYIKGEYM…EDFIGLYGFE (64 aa)) is domain I. The interval 65–143 (SLEELDMFKL…SDELLNCIDE (79 aa)) is domain II. Residues 144 to 154 (FDDVTQDNSLA) are flexible linker. Residues 154–198 (ALSEALSALISLGYTEKEAEKVLKDVDKSESVENIIKSALVKLMG) are domain III.

It belongs to the RuvA family. Homotetramer. Forms an RuvA(8)-RuvB(12)-Holliday junction (HJ) complex. HJ DNA is sandwiched between 2 RuvA tetramers; dsDNA enters through RuvA and exits via RuvB. An RuvB hexamer assembles on each DNA strand where it exits the tetramer. Each RuvB hexamer is contacted by two RuvA subunits (via domain III) on 2 adjacent RuvB subunits; this complex drives branch migration. In the full resolvosome a probable DNA-RuvA(4)-RuvB(12)-RuvC(2) complex forms which resolves the HJ.

Its subcellular location is the cytoplasm. In terms of biological role, the RuvA-RuvB-RuvC complex processes Holliday junction (HJ) DNA during genetic recombination and DNA repair, while the RuvA-RuvB complex plays an important role in the rescue of blocked DNA replication forks via replication fork reversal (RFR). RuvA specifically binds to HJ cruciform DNA, conferring on it an open structure. The RuvB hexamer acts as an ATP-dependent pump, pulling dsDNA into and through the RuvAB complex. HJ branch migration allows RuvC to scan DNA until it finds its consensus sequence, where it cleaves and resolves the cruciform DNA. This is Holliday junction branch migration complex subunit RuvA from Clostridium botulinum (strain Alaska E43 / Type E3).